We begin with the raw amino-acid sequence, 431 residues long: Histidinol dehydrogenase (431 aa).

Positions 127, 189, and 212 each coordinate NAD(+). 3 residues coordinate substrate: Ser-237, Gln-259, and His-262. Zn(2+) is bound by residues Gln-259 and His-262. Residues Glu-326 and His-327 each act as proton acceptor in the active site. 4 residues coordinate substrate: His-327, Asp-360, Glu-414, and His-419. Position 360 (Asp-360) interacts with Zn(2+). Position 419 (His-419) interacts with Zn(2+).

The protein belongs to the histidinol dehydrogenase family. The cofactor is Zn(2+).

It catalyses the reaction L-histidinol + 2 NAD(+) + H2O = L-histidine + 2 NADH + 3 H(+). Its pathway is amino-acid biosynthesis; L-histidine biosynthesis; L-histidine from 5-phospho-alpha-D-ribose 1-diphosphate: step 9/9. In terms of biological role, catalyzes the sequential NAD-dependent oxidations of L-histidinol to L-histidinaldehyde and then to L-histidine. This chain is Histidinol dehydrogenase, found in Xylella fastidiosa (strain 9a5c).